Here is a 433-residue protein sequence, read N- to C-terminus: Putative purine permease YbbY (433 aa).

Residues 1–17 are Periplasmic-facing; the sequence is MFNFAVSRESLLSGFQW. A helical transmembrane segment spans residues 18 to 38; the sequence is FFFIFCNTVVVPPTLLSAFQL. Over 39–42 the chain is Cytoplasmic; sequence PQSS. Residues 43–63 form a helical membrane-spanning segment; it reads LLTLTQYAFLATALACFAQAF. Over 64–68 the chain is Periplasmic; the sequence is CGHRR. The chain crosses the membrane as a helical span at residues 69 to 89; sequence AIMEGPGGLWWGTILTITLGE. Residues 90-102 lie on the Cytoplasmic side of the membrane; the sequence is ASRGTPINDIATS. Residues 103–123 traverse the membrane as a helical segment; sequence LAVGIALSGVLTMLIGFSGLG. Residues 124 to 130 are Periplasmic-facing; it reads HRLARLF. Residues 131 to 151 traverse the membrane as a helical segment; that stretch reads TPSVMVLFMLMLGAQLTTIFF. Residues 152–169 lie on the Cytoplasmic side of the membrane; it reads KGMLGLPFGIADPNFKIQ. The helical transmembrane segment at 170-190 threads the bilayer; the sequence is LPPFALSVAVMCLVLAMIIFL. At 191 to 196 the chain is on the periplasmic side; the sequence is PQRFAR. The helical transmembrane segment at 197-217 threads the bilayer; sequence YGLLVGTITGWLLWYFCFPSS. Over 218–230 the chain is Cytoplasmic; that stretch reads HSLSGELHWQWFP. The helical transmembrane segment at 231-251 threads the bilayer; that stretch reads LGSGGALSPGIILTAVITGLV. Residues 252-288 lie on the Periplasmic side of the membrane; that stretch reads NISNTYGAIRGTDVFYPQQGAGNTRYRRSFVATGFMT. The helical transmembrane segment at 289–309 threads the bilayer; sequence LITVPLAVIPFSPFVSSIGLL. The Cytoplasmic segment spans residues 310–319; it reads TQTGDYTRRS. The helical transmembrane segment at 320–340 threads the bilayer; the sequence is FIYGSVICLLVALVPALTRLF. Residues 341-345 lie on the Periplasmic side of the membrane; the sequence is CSIPL. The helical transmembrane segment at 346–366 threads the bilayer; sequence PVSSAVMLVSYLPLLFSALVF. Residues 367 to 379 are Cytoplasmic-facing; that stretch reads SQQITFTARNIYR. A helical transmembrane segment spans residues 380-400; the sequence is LALPLFVGIFLMALPPVYLQD. Residues 401–407 are Periplasmic-facing; the sequence is LPLTLRP. A helical transmembrane segment spans residues 408-428; the sequence is LLSNGLLVGILLAVLMDNLIP. The Cytoplasmic portion of the chain corresponds to 429 to 433; that stretch reads WERIE.

The protein belongs to the nucleobase:cation symporter-2 (NCS2) (TC 2.A.40) family.

The protein localises to the cell inner membrane. The protein is Putative purine permease YbbY (ybbY) of Escherichia coli (strain K12).